The following is a 592-amino-acid chain: Arginine--tRNA ligase (592 aa).

Residues 134–144 carry the 'HIGH' region motif; sequence ANPTGPLHVGH.

The protein belongs to the class-I aminoacyl-tRNA synthetase family. Monomer.

The protein localises to the cytoplasm. The enzyme catalyses tRNA(Arg) + L-arginine + ATP = L-arginyl-tRNA(Arg) + AMP + diphosphate. The chain is Arginine--tRNA ligase from Coxiella burnetii (strain CbuK_Q154) (Coxiella burnetii (strain Q154)).